The chain runs to 121 residues: Large ribosomal subunit protein uL14 (121 aa).

It belongs to the universal ribosomal protein uL14 family. Part of the 50S ribosomal subunit. Forms a cluster with proteins L3 and L19. In the 70S ribosome, L14 and L19 interact and together make contacts with the 16S rRNA in bridges B5 and B8.

In terms of biological role, binds to 23S rRNA. Forms part of two intersubunit bridges in the 70S ribosome. The sequence is that of Large ribosomal subunit protein uL14 from Synechococcus sp. (strain WH7803).